The sequence spans 261 residues: 4-hydroxy-tetrahydrodipicolinate reductase (261 aa).

NAD(+) is bound by residues Gly-13–Met-18, Gly-91–Ser-93, and Ala-115–Phe-118. His-149 serves as the catalytic Proton donor/acceptor. His-150 is a binding site for (S)-2,3,4,5-tetrahydrodipicolinate. Catalysis depends on Lys-153, which acts as the Proton donor. Gly-159–Thr-160 lines the (S)-2,3,4,5-tetrahydrodipicolinate pocket.

It belongs to the DapB family.

The protein localises to the cytoplasm. The catalysed reaction is (S)-2,3,4,5-tetrahydrodipicolinate + NAD(+) + H2O = (2S,4S)-4-hydroxy-2,3,4,5-tetrahydrodipicolinate + NADH + H(+). The enzyme catalyses (S)-2,3,4,5-tetrahydrodipicolinate + NADP(+) + H2O = (2S,4S)-4-hydroxy-2,3,4,5-tetrahydrodipicolinate + NADPH + H(+). It participates in amino-acid biosynthesis; L-lysine biosynthesis via DAP pathway; (S)-tetrahydrodipicolinate from L-aspartate: step 4/4. Functionally, catalyzes the conversion of 4-hydroxy-tetrahydrodipicolinate (HTPA) to tetrahydrodipicolinate. This is 4-hydroxy-tetrahydrodipicolinate reductase from Granulibacter bethesdensis (strain ATCC BAA-1260 / CGDNIH1).